A 348-amino-acid polypeptide reads, in one-letter code: NADH-quinone oxidoreductase subunit H (348 aa).

9 consecutive transmembrane segments (helical) span residues 13-33, 50-70, 82-102, 115-135, 161-181, 198-218, 258-278, 285-305, and 321-341; these read LIMVGQSLLLLVCLLVAIAFL, PNVVGPFGLFQSFADLLKFIL, AVFLLAPLVAVTLALATYAVI, VGILYIFAISSLEVYGIIMGG, IGLVIVTVLLCVGSLNLTDIV, FLDWHWLSLFPMFIVFFISGL, AIVLICCLTTILFLGGWLPIV, WVPGIVWFALKGCMVFFMIAL, and LGWKVFLPLSLAMVVIVAFVL.

It belongs to the complex I subunit 1 family. As to quaternary structure, NDH-1 is composed of 14 different subunits. Subunits NuoA, H, J, K, L, M, N constitute the membrane sector of the complex.

The protein localises to the cell inner membrane. It catalyses the reaction a quinone + NADH + 5 H(+)(in) = a quinol + NAD(+) + 4 H(+)(out). Its function is as follows. NDH-1 shuttles electrons from NADH, via FMN and iron-sulfur (Fe-S) centers, to quinones in the respiratory chain. The immediate electron acceptor for the enzyme in this species is believed to be ubiquinone. Couples the redox reaction to proton translocation (for every two electrons transferred, four hydrogen ions are translocated across the cytoplasmic membrane), and thus conserves the redox energy in a proton gradient. This subunit may bind ubiquinone. This is NADH-quinone oxidoreductase subunit H from Agrobacterium fabrum (strain C58 / ATCC 33970) (Agrobacterium tumefaciens (strain C58)).